A 339-amino-acid chain; its full sequence is UPF0324 membrane protein spyM18_1033 (339 aa).

A run of 9 helical transmembrane segments spans residues 7–24 (KLPG…AWYL), 28–50 (FPII…FYGH), 57–79 (GISF…GLNL), 84–106 (AVGM…VAYG), 118–140 (ATLV…APVI), 150–172 (AISV…GQLL), 256–275 (FILF…SFGV), 290–307 (FIVM…LVKL), and 314–336 (AILL…QLSL).

The protein belongs to the UPF0324 family.

Its subcellular location is the cell membrane. The sequence is that of UPF0324 membrane protein spyM18_1033 from Streptococcus pyogenes serotype M18 (strain MGAS8232).